The chain runs to 85 residues: Putative defensin-like protein 258 (85 aa).

The first 25 residues, 1–25 (MINVSLKRSLLIFISVITSNIGSEA), serve as a signal peptide directing secretion. 3 disulfides stabilise this stretch: C57/C75, C63/C82, and C67/C84.

This sequence belongs to the DEFL family.

The protein localises to the secreted. The polypeptide is Putative defensin-like protein 258 (Arabidopsis thaliana (Mouse-ear cress)).